A 62-amino-acid chain; its full sequence is Small ribosomal subunit protein bS21 (62 aa).

Residues 40–52 are compositionally biased toward basic and acidic residues; that stretch reads KPSVKRKLKSEAA. The tract at residues 40-62 is disordered; it reads KPSVKRKLKSEAARKRKNKRRRY. The span at 53–62 shows a compositional bias: basic residues; it reads RKRKNKRRRY.

This sequence belongs to the bacterial ribosomal protein bS21 family.

This chain is Small ribosomal subunit protein bS21, found in Limosilactobacillus fermentum (strain NBRC 3956 / LMG 18251) (Lactobacillus fermentum).